We begin with the raw amino-acid sequence, 228 residues long: ATP synthase F(0) complex subunit a (228 aa).

Transmembrane regions (helical) follow at residues 13–33, 70–90, 100–120, 140–160, 162–182, and 190–210; these read YFLG…TMFI, WALL…TGLL, LSLN…MGAT, APFL…ALGV, LTAN…ALIN, and LFLT…VSFI.

The protein belongs to the ATPase A chain family. Component of the ATP synthase complex composed at least of ATP5F1A/subunit alpha, ATP5F1B/subunit beta, ATP5MC1/subunit c (homooctomer), MT-ATP6/subunit a, MT-ATP8/subunit 8, ATP5ME/subunit e, ATP5MF/subunit f, ATP5MG/subunit g, ATP5MK/subunit k, ATP5MJ/subunit j, ATP5F1C/subunit gamma, ATP5F1D/subunit delta, ATP5F1E/subunit epsilon, ATP5PF/subunit F6, ATP5PB/subunit b, ATP5PD/subunit d, ATP5PO/subunit OSCP. ATP synthase complex consists of a soluble F(1) head domain (subunits alpha(3) and beta(3)) - the catalytic core - and a membrane F(0) domain - the membrane proton channel (subunits c, a, 8, e, f, g, k and j). These two domains are linked by a central stalk (subunits gamma, delta, and epsilon) rotating inside the F1 region and a stationary peripheral stalk (subunits F6, b, d, and OSCP). Interacts with DNAJC30; interaction is direct.

The protein resides in the mitochondrion inner membrane. The enzyme catalyses H(+)(in) = H(+)(out). Subunit a, of the mitochondrial membrane ATP synthase complex (F(1)F(0) ATP synthase or Complex V) that produces ATP from ADP in the presence of a proton gradient across the membrane which is generated by electron transport complexes of the respiratory chain. ATP synthase complex consist of a soluble F(1) head domain - the catalytic core - and a membrane F(1) domain - the membrane proton channel. These two domains are linked by a central stalk rotating inside the F(1) region and a stationary peripheral stalk. During catalysis, ATP synthesis in the catalytic domain of F(1) is coupled via a rotary mechanism of the central stalk subunits to proton translocation. With the subunit c (ATP5MC1), forms the proton-conducting channel in the F(0) domain, that contains two crucial half-channels (inlet and outlet) that facilitate proton movement from the mitochondrial intermembrane space (IMS) into the matrix. Protons are taken up via the inlet half-channel and released through the outlet half-channel, following a Grotthuss mechanism. This chain is ATP synthase F(0) complex subunit a, found in Myxine glutinosa (Atlantic hagfish).